The chain runs to 350 residues: Uroporphyrinogen decarboxylase (350 aa).

Substrate-binding positions include 28 to 32, aspartate 78, tyrosine 155, serine 210, and histidine 325; that span reads RQAGR.

It belongs to the uroporphyrinogen decarboxylase family. Homodimer.

It localises to the cytoplasm. The enzyme catalyses uroporphyrinogen III + 4 H(+) = coproporphyrinogen III + 4 CO2. It functions in the pathway porphyrin-containing compound metabolism; protoporphyrin-IX biosynthesis; coproporphyrinogen-III from 5-aminolevulinate: step 4/4. In terms of biological role, catalyzes the decarboxylation of four acetate groups of uroporphyrinogen-III to yield coproporphyrinogen-III. The chain is Uroporphyrinogen decarboxylase from Trichormus variabilis (strain ATCC 29413 / PCC 7937) (Anabaena variabilis).